The following is a 563-amino-acid chain: Tripeptidyl-peptidase 1 (563 aa).

Positions 1-19 are cleaved as a signal peptide; it reads MRLRTCLLGLLALCVASKC. The propeptide at 20 to 195 is removed in mature form; the sequence is SYSPEPDQQR…PEPQVSGTVG (176 aa). Cysteine 111 and cysteine 122 are joined by a disulfide. The region spanning 199–563 is the Peptidase S53 domain; sequence GVTPSVIRQR…PALLKALIKP (365 aa). Asparagine 210 and asparagine 222 each carry an N-linked (GlcNAc...) asparagine glycan. Active-site charge relay system residues include glutamate 272 and aspartate 276. Residues asparagine 286, asparagine 313, and asparagine 443 are each glycosylated (N-linked (GlcNAc...) asparagine). 2 disulfide bridges follow: cysteine 365-cysteine 526 and cysteine 522-cysteine 537. Serine 475 (charge relay system) is an active-site residue. Ca(2+) is bound by residues aspartate 517 and valine 518. 3 residues coordinate Ca(2+): glycine 539, glycine 541, and aspartate 543.

In terms of assembly, monomer. Interacts with CLN5. Interacts with CLN3. It depends on Ca(2+) as a cofactor. Post-translationally, activated by autocatalytic proteolytical processing upon acidification. N-glycosylation is required for processing and activity.

It is found in the lysosome. The protein localises to the melanosome. It catalyses the reaction Release of an N-terminal tripeptide from a polypeptide, but also has endopeptidase activity.. Functionally, lysosomal serine protease with tripeptidyl-peptidase I activity. May act as a non-specific lysosomal peptidase which generates tripeptides from the breakdown products produced by lysosomal proteinases. Requires substrates with an unsubstituted N-terminus. In Canis lupus familiaris (Dog), this protein is Tripeptidyl-peptidase 1 (TPP1).